The following is a 383-amino-acid chain: Cobalt-precorrin-5B C(1)-methyltransferase (383 aa).

The interval methionine 1–threonine 24 is disordered.

Belongs to the CbiD family.

The enzyme catalyses Co-precorrin-5B + S-adenosyl-L-methionine = Co-precorrin-6A + S-adenosyl-L-homocysteine. It participates in cofactor biosynthesis; adenosylcobalamin biosynthesis; cob(II)yrinate a,c-diamide from sirohydrochlorin (anaerobic route): step 6/10. Its function is as follows. Catalyzes the methylation of C-1 in cobalt-precorrin-5B to form cobalt-precorrin-6A. The chain is Cobalt-precorrin-5B C(1)-methyltransferase from Ralstonia nicotianae (strain ATCC BAA-1114 / GMI1000) (Ralstonia solanacearum).